The sequence spans 86 residues: MSPARINVAACIDSSGSLPIELPVLSDAAGRELLNASPKMTESDDPVALPIIMRPTEPSCVCSVVLLLPRMRGPVIRISMGVPDWL.

This is an uncharacterized protein from Psittacid herpesvirus 1 (isolate Amazon parrot/-/97-0001/1997) (PsHV-1).